The sequence spans 409 residues: Arginine deiminase (409 aa).

Cysteine 398 acts as the Amidino-cysteine intermediate in catalysis.

The protein belongs to the arginine deiminase family.

It is found in the cytoplasm. It catalyses the reaction L-arginine + H2O = L-citrulline + NH4(+). The protein operates within amino-acid degradation; L-arginine degradation via ADI pathway; carbamoyl phosphate from L-arginine: step 1/2. The sequence is that of Arginine deiminase from Metamycoplasma arthritidis (strain 158L3-1) (Mycoplasma arthritidis).